The primary structure comprises 223 residues: NLP effector protein 3 (223 aa).

Positions alanine 90–aspartate 100 match the Conserved undecapeptide motif motif. Residues glycine 107–glutamate 113 carry the Conserved heptapeptide motif motif.

Belongs to the Necrosis inducing protein (NPP1) family.

The protein resides in the secreted. Its subcellular location is the host cytoplasm. Probable secreted effector that may act as a pathogen-associated molecular pattern (PAMP) recognized by the plant immune system. Seems not to induce necrosis, neither in several susceptible or resistant Vitis species nor in the dicot model plant Nicotiana benthamiana. The polypeptide is NLP effector protein 3 (Plasmopara viticola (Downy mildew of grapevine)).